A 368-amino-acid polypeptide reads, in one-letter code: Reverse transcriptase-like protein (368 aa).

Residues 91 to 318 (TRELTVPYWY…SELNWLGHKV (228 aa)) enclose the Reverse transcriptase domain.

It localises to the mitochondrion. This Chlamydomonas reinhardtii (Chlamydomonas smithii) protein is Reverse transcriptase-like protein (RTL).